The following is a 495-amino-acid chain: MQGTKIRLLAGSLLMLASAGYVQADALQPDPAWQQGTLANGLQWQVLATPQRPSDRIEVRLQVNTGSLTESTQQSGFSHAIPRIALTQSGGLDAAQARSLWQQGFDPKRPMPPVIVSYDSTLYSLSLPNNRNDLLKEALTYLANVSGKLTITPETVNHALSSEDMVATWPADTKEGWWRYRLKGSALLGHDPAEPLKQPVDAAKIQAFYEKWYTPDAMTLIVVGNIDARSVAEQINKTFGTLKGKRETPAPVPTLSPLRAESVSIMTDAVRQDRLSIMWDTPWQPIRESAALLRYWQADLAREALFWHIQQELTKNNAKDIGLGFDCRVLFLRAQCAINIESPNDKLNTNLSLVANELAKVRDKGLSEEEFTALVAQKNLELQKLFATYARTDTDILTGQRMRSLQNQVVDIAPEQYQKLRQNFLNSLTVDMLNQNLRQQLSQEMALILLQPQGEPEFNMKALKATWDEIMVPATAAAVEADEAHPEVTETPAAQ.

The first 24 residues, 1-24 (MQGTKIRLLAGSLLMLASAGYVQA), serve as a signal peptide directing secretion.

It belongs to the peptidase M16 family.

Its subcellular location is the periplasm. The polypeptide is Protein YhjJ (yhjJ) (Salmonella typhi).